The chain runs to 179 residues: ATP synthase subunit delta (179 aa).

It belongs to the ATPase delta chain family. In terms of assembly, F-type ATPases have 2 components, F(1) - the catalytic core - and F(0) - the membrane proton channel. F(1) has five subunits: alpha(3), beta(3), gamma(1), delta(1), epsilon(1). F(0) has three main subunits: a(1), b(2) and c(10-14). The alpha and beta chains form an alternating ring which encloses part of the gamma chain. F(1) is attached to F(0) by a central stalk formed by the gamma and epsilon chains, while a peripheral stalk is formed by the delta and b chains.

It localises to the cell inner membrane. Functionally, f(1)F(0) ATP synthase produces ATP from ADP in the presence of a proton or sodium gradient. F-type ATPases consist of two structural domains, F(1) containing the extramembraneous catalytic core and F(0) containing the membrane proton channel, linked together by a central stalk and a peripheral stalk. During catalysis, ATP synthesis in the catalytic domain of F(1) is coupled via a rotary mechanism of the central stalk subunits to proton translocation. This protein is part of the stalk that links CF(0) to CF(1). It either transmits conformational changes from CF(0) to CF(1) or is implicated in proton conduction. The chain is ATP synthase subunit delta from Alkalilimnicola ehrlichii (strain ATCC BAA-1101 / DSM 17681 / MLHE-1).